The sequence spans 317 residues: UV DNA damage endonuclease (317 aa).

It belongs to the uve1/UvsE family.

Component in a DNA repair pathway. Removal of UV LIGHT damaged nucleotides. Recognizes pyrimidine dimers and cleave a phosphodiester bond immediately 5' to the lesion. The chain is UV DNA damage endonuclease from Bacillus mycoides (strain KBAB4) (Bacillus weihenstephanensis).